The chain runs to 728 residues: tRNA (guanine(27)-N(2))-dimethyltransferase (728 aa).

Positions 1–10 (MENMAEEELL) are enriched in acidic residues. Disordered stretches follow at residues 1-78 (MENM…SKRH) and 98-118 (DVDS…SQTC). Phosphothreonine is present on T23. Positions 23–33 (TPAPDSAPVPA) are enriched in pro residues. Positions 34 to 46 (PAADTALDSAPTP) are enriched in low complexity. Residues 47-61 (DSDPAPALAPAPAPA) are compositionally biased toward pro residues. S63 is subject to Phosphoserine. The span at 101–118 (SASSLNSDNPGTENSQTC) shows a compositional bias: polar residues. Residues 132–136 (HKLRR) carry the Nucleolar localization signal motif. The segment at 181 to 203 (YHCIICSATITRRTDMLGHVKRH) adopts a C2H2-type zinc-finger fold. Residues 224-683 (EILKETDTDI…APLMQFKSIL (460 aa)) enclose the Trm1 methyltransferase domain. 4 residues coordinate S-adenosyl-L-methionine: R257, D304, D352, and A353. Zn(2+) is bound by residues C483, C486, C508, and C510. Residue K580 forms a Glycyl lysine isopeptide (Lys-Gly) (interchain with G-Cter in SUMO2) linkage. At S607 the chain carries Phosphoserine. The interval 693–728 (GAQSEGQMPPAAEDTVTDRVEMSVSDKAEASGCRRW) is disordered. A compositionally biased stretch (basic and acidic residues) spans 708–721 (VTDRVEMSVSDKAE).

The protein belongs to the class I-like SAM-binding methyltransferase superfamily. Trm1 family. Expressed in various neuronal structures during embryonic development, including spinal ganglia, trigeminal nerve and ganglion, olfactory and nasopharyngeal epithelium, nuclei of the metencephalon, thalamus and medulla oblongata. Also expressed in lung, esophagus, epiglottis, ependyma, vertebral column, spinal cord and brown adipose tissue. Expression persists in the adult brain with dynamically changing patterns in cortex and cerebellum.

It localises to the nucleus. It is found in the nucleolus. The enzyme catalyses guanosine(27) in tRNA(Tyr) + 2 S-adenosyl-L-methionine = N(2)-dimethylguanosine(27) in tRNA(Tyr) + 2 S-adenosyl-L-homocysteine + 2 H(+). Its function is as follows. Specifically dimethylates a single guanine residue at position 27 of tRNA(Tyr) using S-adenosyl-L-methionine as donor of the methyl groups. Dimethylation at position 27 of tRNA(Tyr) is required for efficient translation of tyrosine codons. Also required to maintain 3-(3-amino-3-carboxypropyl)uridine (acp3U) in the D-loop of several cytoplasmic tRNAs. May play a role in motor coordination and exploratory behavior. This chain is tRNA (guanine(27)-N(2))-dimethyltransferase, found in Mus musculus (Mouse).